The chain runs to 402 residues: Tyrosine-protein kinase transforming protein ros (402 aa).

The Protein kinase domain maps to 98 to 377; that stretch reads LNLHKLLGSG…KLQEIRHSPL (280 aa). Residues 104–112 and K133 contribute to the ATP site; that span reads LGSGAFGEV. D232 serves as the catalytic Proton acceptor. A Phosphotyrosine; by autocatalysis modification is found at Y268.

It belongs to the protein kinase superfamily. Tyr protein kinase family. Insulin receptor subfamily.

The catalysed reaction is L-tyrosyl-[protein] + ATP = O-phospho-L-tyrosyl-[protein] + ADP + H(+). The polypeptide is Tyrosine-protein kinase transforming protein ros (V-ROS) (Galliformes (UR2SV)).